The sequence spans 638 residues: Fructose-1,6-bisphosphatase class 3 (638 aa).

It belongs to the FBPase class 3 family. The cofactor is Mn(2+).

It catalyses the reaction beta-D-fructose 1,6-bisphosphate + H2O = beta-D-fructose 6-phosphate + phosphate. Its pathway is carbohydrate biosynthesis; gluconeogenesis. The chain is Fructose-1,6-bisphosphatase class 3 from Pediococcus pentosaceus (strain ATCC 25745 / CCUG 21536 / LMG 10740 / 183-1w).